A 325-amino-acid chain; its full sequence is GMP reductase (325 aa).

Catalysis depends on Cys-173, which acts as the Thioimidate intermediate. 202-225 (IIADGGIRSHGDIAKSVRFGATMV) contacts NADP(+).

The protein belongs to the IMPDH/GMPR family. GuaC type 2 subfamily.

It catalyses the reaction IMP + NH4(+) + NADP(+) = GMP + NADPH + 2 H(+). In terms of biological role, catalyzes the irreversible NADPH-dependent deamination of GMP to IMP. It functions in the conversion of nucleobase, nucleoside and nucleotide derivatives of G to A nucleotides, and in maintaining the intracellular balance of A and G nucleotides. The polypeptide is GMP reductase (Delftia acidovorans (strain DSM 14801 / SPH-1)).